A 145-amino-acid polypeptide reads, in one-letter code: Pleckstrin homology domain-containing protein 1 (145 aa).

Residues 26-127 (NPERSGWLTK…WINSIGRSIV (102 aa)) enclose the PH domain. Positions 29–53 (RSGWLTKQGDYIKTWRRRWFVLKRG) are binds specifically PtdIns3P.

Binds PtdIns3P. As to expression, ubiquitously expressed.

It localises to the cytoplasm. In terms of biological role, binds specifically to phosphatidylinositol 3-phosphate (PtdIns3P), but not to other phosphoinositides. This chain is Pleckstrin homology domain-containing protein 1 (PH1), found in Arabidopsis thaliana (Mouse-ear cress).